The sequence spans 343 residues: Holliday junction branch migration complex subunit RuvB (343 aa).

Positions 1–181 are large ATPase domain (RuvB-L); the sequence is MDRIIDSAAT…FGIVQRLEFY (181 aa). ATP is bound by residues I20, R21, G62, K65, T66, T67, 128-130, R171, Y181, and R218; that span reads EDF. T66 is a Mg(2+) binding site. Residues 182 to 252 are small ATPAse domain (RuvB-S); that stretch reads SPEDLARIVR…VAQAAMQMLK (71 aa). Residues 255 to 343 are head domain (RuvB-H); sequence QGGFDELDRR…SAFTDPEDLF (89 aa). Residues R291, R310, and R315 each coordinate DNA.

It belongs to the RuvB family. As to quaternary structure, homohexamer. Forms an RuvA(8)-RuvB(12)-Holliday junction (HJ) complex. HJ DNA is sandwiched between 2 RuvA tetramers; dsDNA enters through RuvA and exits via RuvB. An RuvB hexamer assembles on each DNA strand where it exits the tetramer. Each RuvB hexamer is contacted by two RuvA subunits (via domain III) on 2 adjacent RuvB subunits; this complex drives branch migration. In the full resolvosome a probable DNA-RuvA(4)-RuvB(12)-RuvC(2) complex forms which resolves the HJ.

It localises to the cytoplasm. The catalysed reaction is ATP + H2O = ADP + phosphate + H(+). Functionally, the RuvA-RuvB-RuvC complex processes Holliday junction (HJ) DNA during genetic recombination and DNA repair, while the RuvA-RuvB complex plays an important role in the rescue of blocked DNA replication forks via replication fork reversal (RFR). RuvA specifically binds to HJ cruciform DNA, conferring on it an open structure. The RuvB hexamer acts as an ATP-dependent pump, pulling dsDNA into and through the RuvAB complex. RuvB forms 2 homohexamers on either side of HJ DNA bound by 1 or 2 RuvA tetramers; 4 subunits per hexamer contact DNA at a time. Coordinated motions by a converter formed by DNA-disengaged RuvB subunits stimulates ATP hydrolysis and nucleotide exchange. Immobilization of the converter enables RuvB to convert the ATP-contained energy into a lever motion, pulling 2 nucleotides of DNA out of the RuvA tetramer per ATP hydrolyzed, thus driving DNA branch migration. The RuvB motors rotate together with the DNA substrate, which together with the progressing nucleotide cycle form the mechanistic basis for DNA recombination by continuous HJ branch migration. Branch migration allows RuvC to scan DNA until it finds its consensus sequence, where it cleaves and resolves cruciform DNA. This Xylella fastidiosa (strain Temecula1 / ATCC 700964) protein is Holliday junction branch migration complex subunit RuvB.